The following is a 1216-amino-acid chain: Tyrosine-protein kinase receptor ver-4 (1216 aa).

The Extracellular segment spans residues 1–789 (MRVSLTEFLV…VKVAGASSSS (789 aa)). Residues Asn142, Asn195, Asn206, Asn245, Asn283, Asn333, Asn348, Asn384, Asn402, Asn412, Asn496, Asn508, Asn588, Asn599, Asn664, and Asn703 are each glycosylated (N-linked (GlcNAc...) asparagine). Ig-like C2-type domains lie at 596 to 691 (KSVN…TSIS) and 697 to 783 (PPFL…VKVA). A disulfide bond links Cys619 and Cys675. A disulfide bridge links Cys721 with Cys765. A helical transmembrane segment spans residues 790–810 (FFWLFITFFAFVVVGIVVSLL). The Cytoplasmic portion of the chain corresponds to 811–1216 (WKLFGQKDLK…WVQKPTQLFF (406 aa)). The 312-residue stretch at 870–1181 (LEILETLGSG…IKLFKNHIQY (312 aa)) folds into the Protein kinase domain. ATP-binding positions include 876–884 (LGSGQFGIV) and Lys908. Asp1042 (proton acceptor) is an active-site residue.

The protein belongs to the protein kinase superfamily. Tyr protein kinase family.

It is found in the cell membrane. The catalysed reaction is L-tyrosyl-[protein] + ATP = O-phospho-L-tyrosyl-[protein] + ADP + H(+). In terms of biological role, receptor tyrosine kinase which may be involved, downstream of pvf-1, in the positioning of ray 1, the most anterior ray sensillum in the male tail. This Caenorhabditis elegans protein is Tyrosine-protein kinase receptor ver-4.